A 143-amino-acid chain; its full sequence is Hexaprenyl-diphosphate synthase small subunit ((2E,6E)-farnesyl-diphosphate specific) (143 aa).

Dimer of heterodimer or heterotetramer composed of a small (Hexs-a) and large (Hexs-B) subunit.

The catalysed reaction is 3 isopentenyl diphosphate + (2E,6E)-farnesyl diphosphate = all-trans-hexaprenyl diphosphate + 3 diphosphate. In terms of biological role, catalyzes the condensation of three molecules of isopentenyl diphosphate with farnesyl diphosphate (FPP) to yield (all-E)-hexaprenyl diphosphate (HexPP; C30), the precursor of the prenyl side chain of menaquinone-6. Large subunit Hexs-B catalyzes the condensation reaction and the final product chain length is cooperatively regulated by both the Hexs-A and Hexs-B subunits using the whole size of the hydrophobic cleft as a ruler. The chain is Hexaprenyl-diphosphate synthase small subunit ((2E,6E)-farnesyl-diphosphate specific) (hexs-a) from Micrococcus luteus (Micrococcus lysodeikticus).